A 291-amino-acid polypeptide reads, in one-letter code: MSASTQQEPSLILITGMSGAGRRATAAALEELGWYVADNLPPELIVRMVELSFSDDSPIEKLAIVTDVRSRDFAGNLTSVLHDLHTGGRRPTVLYLDATDEALIARFDAVRRTHPLQQKGTLQDGIDREREMLTSIRERADIVLDTTNRSIHDLRRELEKFFAAADHSSVRINVQSFGFKHGPPKDIDMLLDARFLPNPYWDPELRPFKGIDAPVSDFVLSQPGAQAFLDHIVGLIHSVLPGYRKEGKFFVSVAIGCTGGHHRSVAIVEELTRRLADDGVLVNLSHRDLER.

Residue 16–23 (GMSGAGRR) coordinates ATP. Position 67-70 (67-70 (DVRS)) interacts with GTP.

This sequence belongs to the RapZ-like family.

Displays ATPase and GTPase activities. This is Nucleotide-binding protein jk1004 from Corynebacterium jeikeium (strain K411).